Here is a 303-residue protein sequence, read N- to C-terminus: Catechol 1,2-dioxygenase (303 aa).

Tyrosine 156, tyrosine 191, histidine 215, and histidine 217 together coordinate Fe cation.

Homodimer. It depends on Fe(3+) as a cofactor.

The catalysed reaction is catechol + O2 = cis,cis-muconate + 2 H(+). It participates in aromatic compound metabolism; beta-ketoadipate pathway; 5-oxo-4,5-dihydro-2-furylacetate from catechol: step 1/3. Inhibited by Ag(+), Cu(+), Hg(2+) and Pb(2+). Can cleave 4-methylcatechol at lower rates than catechol, but has no activity with 3-methylcatechol, 4-chlorocatechol, 4-carboxycatechol or hydroxyquinol. This chain is Catechol 1,2-dioxygenase (HQD2), found in Candida albicans (strain SC5314 / ATCC MYA-2876) (Yeast).